The following is a 130-amino-acid chain: Small ribosomal subunit protein uS9 (130 aa).

The interval 109-130 is disordered; sequence RMKERKKYGLKGARRAPQFSKR. Positions 111-130 are enriched in basic residues; that stretch reads KERKKYGLKGARRAPQFSKR.

The protein belongs to the universal ribosomal protein uS9 family.

The protein is Small ribosomal subunit protein uS9 of Listeria innocua serovar 6a (strain ATCC BAA-680 / CLIP 11262).